A 527-amino-acid polypeptide reads, in one-letter code: Probable bifunctional tRNA threonylcarbamoyladenosine biosynthesis protein (527 aa).

Residues methionine 1–tryptophan 324 are kae1. Residues histidine 107, histidine 111, and tyrosine 128 each coordinate Fe cation. Residues tyrosine 128–glycine 132, aspartate 160, glycine 173, glutamate 177, and asparagine 257 contribute to the L-threonylcarbamoyladenylate site. Aspartate 285 is a binding site for Fe cation. A Protein kinase domain is found at valine 330 to valine 527. Residues arginine 333–isoleucine 341 and lysine 354 each bind ATP. Aspartate 445 serves as the catalytic Proton acceptor; for kinase activity.

In the N-terminal section; belongs to the KAE1 / TsaD family. This sequence in the C-terminal section; belongs to the protein kinase superfamily. Tyr protein kinase family. BUD32 subfamily. Component of the KEOPS complex that consists of Kae1, Bud32, Cgi121 and Pcc1; the whole complex dimerizes. Requires Fe(2+) as cofactor.

It localises to the cytoplasm. It carries out the reaction L-seryl-[protein] + ATP = O-phospho-L-seryl-[protein] + ADP + H(+). The catalysed reaction is L-threonyl-[protein] + ATP = O-phospho-L-threonyl-[protein] + ADP + H(+). The enzyme catalyses L-threonylcarbamoyladenylate + adenosine(37) in tRNA = N(6)-L-threonylcarbamoyladenosine(37) in tRNA + AMP + H(+). Its function is as follows. Required for the formation of a threonylcarbamoyl group on adenosine at position 37 (t(6)A37) in tRNAs that read codons beginning with adenine. Is a component of the KEOPS complex that is probably involved in the transfer of the threonylcarbamoyl moiety of threonylcarbamoyl-AMP (TC-AMP) to the N6 group of A37. The Kae1 domain likely plays a direct catalytic role in this reaction. The Bud32 domain probably displays kinase activity that regulates Kae1 function. In Thermoplasma volcanium (strain ATCC 51530 / DSM 4299 / JCM 9571 / NBRC 15438 / GSS1), this protein is Probable bifunctional tRNA threonylcarbamoyladenosine biosynthesis protein.